The chain runs to 364 residues: Peptide chain release factor 1 (364 aa).

The residue at position 238 (Gln238) is an N5-methylglutamine. Residues 286–297 (DEKRQAEEDSTR) show a composition bias toward basic and acidic residues. Positions 286–315 (DEKRQAEEDSTRRNLVGSGDRSERIRTYNY) are disordered.

Belongs to the prokaryotic/mitochondrial release factor family. Methylated by PrmC. Methylation increases the termination efficiency of RF1.

It is found in the cytoplasm. Peptide chain release factor 1 directs the termination of translation in response to the peptide chain termination codons UAG and UAA. This Idiomarina loihiensis (strain ATCC BAA-735 / DSM 15497 / L2-TR) protein is Peptide chain release factor 1.